The primary structure comprises 144 residues: Transcription antitermination protein NusB (144 aa).

The protein belongs to the NusB family.

Functionally, involved in transcription antitermination. Required for transcription of ribosomal RNA (rRNA) genes. Binds specifically to the boxA antiterminator sequence of the ribosomal RNA (rrn) operons. In Paraburkholderia phytofirmans (strain DSM 17436 / LMG 22146 / PsJN) (Burkholderia phytofirmans), this protein is Transcription antitermination protein NusB.